The primary structure comprises 124 residues: Small ribosomal subunit protein uS12 (124 aa).

At D89 the chain carries 3-methylthioaspartic acid.

It belongs to the universal ribosomal protein uS12 family. In terms of assembly, part of the 30S ribosomal subunit. Contacts proteins S8 and S17. May interact with IF1 in the 30S initiation complex.

Functionally, with S4 and S5 plays an important role in translational accuracy. In terms of biological role, interacts with and stabilizes bases of the 16S rRNA that are involved in tRNA selection in the A site and with the mRNA backbone. Located at the interface of the 30S and 50S subunits, it traverses the body of the 30S subunit contacting proteins on the other side and probably holding the rRNA structure together. The combined cluster of proteins S8, S12 and S17 appears to hold together the shoulder and platform of the 30S subunit. In Sodalis glossinidius (strain morsitans), this protein is Small ribosomal subunit protein uS12.